Here is a 122-residue protein sequence, read N- to C-terminus: Small ribosomal subunit protein uS13 (122 aa).

Residues 95-122 (GLPVRGQRTKTNSRTRKGRRKTVANKKK) are disordered. A compositionally biased stretch (basic residues) spans 101–122 (QRTKTNSRTRKGRRKTVANKKK).

The protein belongs to the universal ribosomal protein uS13 family. As to quaternary structure, part of the 30S ribosomal subunit. Forms a loose heterodimer with protein S19. Forms two bridges to the 50S subunit in the 70S ribosome.

Located at the top of the head of the 30S subunit, it contacts several helices of the 16S rRNA. In the 70S ribosome it contacts the 23S rRNA (bridge B1a) and protein L5 of the 50S subunit (bridge B1b), connecting the 2 subunits; these bridges are implicated in subunit movement. Contacts the tRNAs in the A and P-sites. The protein is Small ribosomal subunit protein uS13 of Protochlamydia amoebophila (strain UWE25).